The chain runs to 284 residues: Phosphate import ATP-binding protein PstB 2 (284 aa).

Over residues 1–22 (MTLLSTLRGISSPARQQPGTQS) the composition is skewed to polar residues. The interval 1 to 29 (MTLLSTLRGISSPARQQPGTQSESRRGGD) is disordered. Residues 36 to 278 (LAVAGVSHGF…PDDARARKFI (243 aa)) enclose the ABC transporter domain. ATP is bound at residue 68-75 (GPSGTGKT).

The protein belongs to the ABC transporter superfamily. Phosphate importer (TC 3.A.1.7) family. The complex is composed of two ATP-binding proteins (PstB), two transmembrane proteins (PstC and PstA) and a solute-binding protein (PstS).

It is found in the cell membrane. It carries out the reaction phosphate(out) + ATP + H2O = ADP + 2 phosphate(in) + H(+). In terms of biological role, part of the ABC transporter complex PstSACB involved in phosphate import. Responsible for energy coupling to the transport system. In Natronomonas pharaonis (strain ATCC 35678 / DSM 2160 / CIP 103997 / JCM 8858 / NBRC 14720 / NCIMB 2260 / Gabara) (Halobacterium pharaonis), this protein is Phosphate import ATP-binding protein PstB 2.